A 433-amino-acid polypeptide reads, in one-letter code: GPI mannosyltransferase 2 (433 aa).

9 consecutive transmembrane segments (helical) span residues 4 to 24 (LVKP…IISL), 109 to 129 (TAVI…FYLT), 148 to 165 (ATFT…GFFT), 172 to 194 (LSFL…IIPY), 204 to 226 (FYYT…NCIL), 247 to 267 (ALLF…RQQF), 322 to 342 (IPNF…TFYF), 354 to 374 (LIFI…VQII), and 410 to 430 (GYIY…VFFL).

The protein belongs to the PIGV family.

The protein resides in the endoplasmic reticulum membrane. It functions in the pathway glycolipid biosynthesis; glycosylphosphatidylinositol-anchor biosynthesis. Mannosyltransferase involved in glycosylphosphatidylinositol-anchor biosynthesis. Transfers the second mannose to the glycosylphosphatidylinositol during GPI precursor assembly. The chain is GPI mannosyltransferase 2 (GPI18) from Candida glabrata (strain ATCC 2001 / BCRC 20586 / JCM 3761 / NBRC 0622 / NRRL Y-65 / CBS 138) (Yeast).